Here is a 1691-residue protein sequence, read N- to C-terminus: Collagen alpha-6(IV) chain (1691 aa).

Residues 1–22 form the signal peptide; the sequence is MLINKLWLLLVTLCLTEELAAA. A 7S domain region spans residues 23-46; the sequence is GEKSYGKPCGGQDCSGSCQCFPEK. Positions 47 to 1463 are triple-helical region; it reads GARGRPGPIG…FGMPGMPGQS (1417 aa). 5 disordered regions span residues 108–338, 404–473, 486–881, 915–1099, and 1185–1459; these read IPGH…EGQK, GFPG…LGLK, GGVP…KGSP, GIPG…KGRD, and THGT…MPGM. N-linked (GlcNAc...) asparagine glycosylation is present at Asn127. A compositionally biased stretch (low complexity) spans 185–197; it reads PQGAPGFPGAVGP. Over residues 198–213 the composition is skewed to pro residues; that stretch reads AGPPGLQGPPGPPGPL. Composition is skewed to low complexity over residues 311-320 and 421-431; these read QGPPGQQGKK and GAAGLPGRDGL. Composition is skewed to pro residues over residues 432–443 and 491–502; these read PGPPGPPGPPSP and TGPPGEPGPPGP. Residues 503-512 are compositionally biased toward low complexity; it reads WGLIGLPGLK. Residues 515-517 carry the Cell attachment site motif; sequence RGD. Over residues 526 to 541 the composition is skewed to low complexity; it reads PAGAPGLVGPLGPSGP. The short motif at 560-562 is the Cell attachment site element; that stretch reads RGD. Gly residues predominate over residues 588-599; the sequence is GLPGDGGQGFPG. Composition is skewed to low complexity over residues 641–652, 660–703, 722–735, and 802–820; these read LPGQQGLPGSKG, PGSY…GSPG, LPGF…DGLP, and SPGT…SSGP. Basic residues predominate over residues 842–851; it reads PGKKGTRGKK. Positions 853 to 878 are enriched in low complexity; that stretch reads PPGSIVKKGLPGLKGLPGNPGLVGLK. The short motif at 986–988 is the Cell attachment site element; that stretch reads RGD. Over residues 1055–1068 the composition is skewed to low complexity; it reads SPGLPGASGLPGLK. Residues 1210–1220 show a composition bias toward gly residues; it reads GYPGIGIGAPG. A compositionally biased stretch (low complexity) spans 1234–1253; sequence PGLQGPAGLPGAPGISLPSL. Residues 1275–1284 are compositionally biased toward pro residues; the sequence is PAGPPGPPGP. Positions 1360 to 1371 are enriched in polar residues; the sequence is SGLQGDPGQTPT. Low complexity-rich tracts occupy residues 1384–1397 and 1429–1459; these read LPGI…TGDP and ALGD…MPGM. Positions 1467 to 1691 constitute a Collagen IV NC1 domain; the sequence is GYTLVKHSQS…SRCQVCMKSL (225 aa). Disulfide bonds link Cys1482-Cys1571, Cys1515-Cys1568, Cys1527-Cys1533, Cys1590-Cys1687, Cys1624-Cys1684, and Cys1636-Cys1643.

It belongs to the type IV collagen family. As to quaternary structure, there are six type IV collagen isoforms, alpha 1(IV)-alpha 6(IV), each of which can form a triple helix structure with 2 other chains to generate type IV collagen network. In terms of processing, prolines at the third position of the tripeptide repeating unit (G-X-Y) are hydroxylated in some or all of the chains. Post-translationally, type IV collagens contain numerous cysteine residues which are involved in inter- and intramolecular disulfide bonding. 12 of these, located in the NC1 domain, are conserved in all known type IV collagens. The trimeric structure of the NC1 domains is stabilized by covalent bonds between Lys and Met residues.

Its subcellular location is the secreted. It is found in the extracellular space. The protein localises to the extracellular matrix. The protein resides in the basement membrane. Its function is as follows. Type IV collagen is the major structural component of glomerular basement membranes (GBM), forming a 'chicken-wire' meshwork together with laminins, proteoglycans and entactin/nidogen. The polypeptide is Collagen alpha-6(IV) chain (COL4A6) (Homo sapiens (Human)).